Reading from the N-terminus, the 219-residue chain is Envelope protein UL45 homolog (219 aa).

The Intravirion segment spans residues 1–57 (MEDYKLLQLETATVDAQAPPLPTKTVPVFAPPLSTPPQPNELVYTKRRRTKRKAKCR). Residues 58-78 (CLFFTMGMFALGVLMTTAILV) form a helical; Signal-anchor for type II membrane protein membrane-spanning segment. Residues 79–219 (STFILTVPIG…RLDHIIPFPR (141 aa)) are Virion surface-facing. N113, N120, and N138 each carry an N-linked (GlcNAc...) asparagine; by host glycan.

The protein belongs to the herpesviridae HHV-1 UL45 family. Post-translationally, N-glycosylated.

The protein resides in the virion membrane. In Equine herpesvirus 1 (strain Ab4p) (EHV-1), this protein is Envelope protein UL45 homolog.